The primary structure comprises 415 residues: Levansucrase LscA (415 aa).

Trp45, Asp46, Ala132, Arg202, and Asp203 together coordinate sucrose. The active-site Nucleophile is Asp46. The active-site Proton donor/acceptor is the Glu287.

Belongs to the glycosyl hydrolase 68 family.

It localises to the periplasm. The enzyme catalyses [6)-beta-D-fructofuranosyl-(2-&gt;](n) alpha-D-glucopyranoside + sucrose = [6)-beta-D-fructofuranosyl-(2-&gt;](n+1) alpha-D-glucopyranoside + D-glucose. Functionally, catalyzes the synthesis of levan, a fructose polymer, by transferring the fructosyl moiety from sucrose to a growing acceptor molecule. LscA encodes a functional enzyme in vitro, when expressed in E.coli under control of the vector-based lactose promoter (Plac), and it can restore levan production to the lscB-lscC double mutant. However, lscA is not expressed in P.savastanoi pv. glycinea PG4180 under standard conditions. It could be an ancestral Lsc variant in P.syringae. The chain is Levansucrase LscA from Pseudomonas savastanoi pv. glycinea (Pseudomonas syringae pv. glycinea).